Reading from the N-terminus, the 223-residue chain is Class E basic helix-loop-helix protein 23 (223 aa).

Residues 32-93 are disordered; sequence PETTRGFGAS…GVAVDARRRP (62 aa). In terms of domain architecture, bHLH spans 98 to 152; it reads SLRLSINARERRRMHDLNDALDGLRAVIPYAHSPSVRKLSKIATLLLAKNYILMQ.

In terms of tissue distribution, expressed in brain and retina.

It localises to the nucleus. May function as transcriptional repressor. May modulate the expression of genes required for the differentiation and/or maintenance of pancreatic and neuronal cell types. May be important for rod bipolar cell maturation. This Mus musculus (Mouse) protein is Class E basic helix-loop-helix protein 23 (Bhlhe23).